The following is a 758-amino-acid chain: Probable adenosylcobalamin-dependent ribonucleoside-triphosphate reductase (758 aa).

Residues Cys194 and Cys459 are joined by a disulfide bond. Residues 233–256 form a disordered region; sequence IIIKGQLPPPPPQQQPQQQQQQHG. Catalysis depends on residues Cys448 and Glu450.

Belongs to the class II ribonucleoside-triphosphate reductase family. In terms of assembly, monomer. Requires adenosylcob(III)alamin as cofactor.

The catalysed reaction is a 2'-deoxyribonucleoside 5'-triphosphate + [thioredoxin]-disulfide + H2O = a ribonucleoside 5'-triphosphate + [thioredoxin]-dithiol. This is Probable adenosylcobalamin-dependent ribonucleoside-triphosphate reductase (rtpR) from Dictyostelium discoideum (Social amoeba).